Reading from the N-terminus, the 265-residue chain is Undecaprenyl-diphosphatase (265 aa).

8 helical membrane passes run 7–27 (VIVS…PISS), 45–65 (TKIL…YFFH), 86–106 (LHIL…YKKI), 108–128 (LLFN…FLLI), 145–165 (ISLL…YPGF), 186–206 (IEFS…YDFI), 214–234 (ILDL…SILC), and 245–265 (TSLI…YFIN).

Belongs to the UppP family.

The protein localises to the cell membrane. It catalyses the reaction di-trans,octa-cis-undecaprenyl diphosphate + H2O = di-trans,octa-cis-undecaprenyl phosphate + phosphate + H(+). Its function is as follows. Catalyzes the dephosphorylation of undecaprenyl diphosphate (UPP). Confers resistance to bacitracin. The protein is Undecaprenyl-diphosphatase of Buchnera aphidicola subsp. Acyrthosiphon pisum (strain 5A).